The chain runs to 368 residues: 2-aminoethylphosphonate--pyruvate transaminase (368 aa).

An N6-(pyridoxal phosphate)lysine modification is found at K192.

Belongs to the class-V pyridoxal-phosphate-dependent aminotransferase family. PhnW subfamily. Homodimer. Pyridoxal 5'-phosphate serves as cofactor.

The enzyme catalyses (2-aminoethyl)phosphonate + pyruvate = phosphonoacetaldehyde + L-alanine. Functionally, involved in phosphonate degradation. The protein is 2-aminoethylphosphonate--pyruvate transaminase of Pseudomonas putida (strain W619).